We begin with the raw amino-acid sequence, 549 residues long: MSKRWALPLLLGIFLLAYLLPLGSHGLWIPDETRYAQISQEMLLSGNWVSPHFMNLRYFEKPAAGYWMIAIGQAVFGQNLFGVRFASALSTGLSVLLCFLIARRLWNEPRKSFVCALLYMSFVIVAGQAGYANLDPQFTFWVNLSLVALWFALDSRANGQRLAGWAVLGLACGMGFMTKGFLAWLLPVLIALPWMLWQKRWKELLLYGPVAIAVAIIVSLPWALAVHGQEPDYWRFFFWHEHIRRFAGDDAQHDAPWWFYLPLLVAFSLPWVGMLPVAFKQAWQTRRETGIAFLGLWLLMPLLFFSLSNGKLPTYILPCLLPLALLLGHALADRLRLEQGRALGLNGLLNLLLGLVTLIGLVYVQLKRPLYDHELHSLVLVFIALTGWIISNLLQAFRPLQCWAAPAVGSLLLIALLPAALPRSVVANKMPDQFVLAHQKELTATTHLLSNDLGAASALSWRVKRPQVALYNTIGELKYGLAYPDGIQQRVDPDQVQQWMREARKTGSVGVVMRVKGQDELDELDRLPKDGVRYEQGNLVIMILPQEAS.

The next 12 helical transmembrane spans lie at 9-29 (LLLG…GLWI), 80-102 (LFGV…FLIA), 112-132 (SFVC…AGYA), 133-153 (NLDP…WFAL), 176-196 (FMTK…PWML), 204-224 (LLLY…PWAL), 259-279 (FYLP…PVAF), 290-310 (GIAF…LSNG), 312-332 (LPTY…HALA), 342-362 (ALGL…IGLV), 377-397 (SLVL…LQAF), and 402-422 (CWAA…AALP).

The protein belongs to the glycosyltransferase 83 family.

It is found in the cell inner membrane. The catalysed reaction is 4-amino-4-deoxy-alpha-L-arabinopyranosyl di-trans,octa-cis-undecaprenyl phosphate + lipid IVA = lipid IIA + di-trans,octa-cis-undecaprenyl phosphate.. It participates in lipopolysaccharide metabolism; 4-amino-4-deoxy-beta-L-arabinose-lipid A biosynthesis. Catalyzes the transfer of the L-Ara4N moiety of the glycolipid undecaprenyl phosphate-alpha-L-Ara4N to lipid A. The modified arabinose is attached to lipid A and is required for resistance to polymyxin and cationic antimicrobial peptides. The chain is Undecaprenyl phosphate-alpha-4-amino-4-deoxy-L-arabinose arabinosyl transferase 2 from Pseudomonas fluorescens (strain Pf0-1).